Here is a 189-residue protein sequence, read N- to C-terminus: UPF0494 membrane protein C977.06 (189 aa).

3 consecutive transmembrane segments (helical) span residues 78–98 (WPLL…NFEV), 120–140 (IWGP…GLIY), and 148–168 (AIPL…VAMV).

The protein belongs to the UPF0494 family.

It localises to the membrane. The polypeptide is UPF0494 membrane protein C977.06 (Schizosaccharomyces pombe (strain 972 / ATCC 24843) (Fission yeast)).